The primary structure comprises 1248 residues: Probable serine/threonine-protein kinase DDB_G0278509 (1248 aa).

5 disordered regions span residues 1–26 (MSKVIGYIDYGDPDGNEEPSKQNGEY), 40–61 (SVNGGYDKDNNNHHHHNQEEDY), 100–125 (QSYKLSNSGESMNRSINQSKEEDHLE), 180–220 (QNNN…TKNN), and 235–338 (SIDS…NNNK). Residues 102 to 117 (YKLSNSGESMNRSINQ) show a composition bias toward polar residues. The segment covering 181-216 (NNNNNNSNSNSNSNSNSNNNNNNNNNNNNNNNNNNN) has biased composition (low complexity). 13 LRR repeats span residues 386–407 (SSTELDLSEQELNEFPIFDEKE), 411–432 (GYKIIDLSFNNIKSIPLDAFTN), 435–457 (NLEQLIMFNNNLSDVPSSIEFLK), 458–480 (HLTILDLSHNNLHEICRELGNLS), 481–502 (FLRELYLSNNSLKKFPTTGNLY), 503–524 (NLKKLILDNNQITTIPIECVEP), 527–548 (QLQTLDLSFNKIGTITSSTTTT), 572–593 (NLKQLNLSHNELQEIPSSLRHL), 595–616 (KLHSLSIDYNQISVLPDKVVAS), 619–641 (RLAKLTISNNKIKQLPFAINNLS), 642–663 (SLIELNASNNVIELLPDSICYL), 665–687 (NLKKLNLNNNNLKELPSNIGFLT), and 688–708 (KLVDLQLYNNQISSLPISFLK). Residues 825-873 (YPFQKLDPIPQSLYSSSNPRSHTESDIQKLKNNDETITTTNSSISTTSS) are disordered. The span at 845-858 (SHTESDIQKLKNND) shows a compositional bias: basic and acidic residues. Positions 860-873 (TITTTNSSISTTSS) are enriched in low complexity. Residues 946-1239 (IQFFNLIGQG…SIYHRLENLM (294 aa)) form the Protein kinase domain. Residues 952–960 (IGQGGFSKV) and Lys-973 each bind ATP. Asp-1069 acts as the Proton acceptor in catalysis. The disordered stretch occupies residues 1106–1135 (NNTNNTATSSTTTSSANGANSISNNNNNGT).

It belongs to the protein kinase superfamily. TKL Ser/Thr protein kinase family.

The enzyme catalyses L-seryl-[protein] + ATP = O-phospho-L-seryl-[protein] + ADP + H(+). It catalyses the reaction L-threonyl-[protein] + ATP = O-phospho-L-threonyl-[protein] + ADP + H(+). This chain is Probable serine/threonine-protein kinase DDB_G0278509, found in Dictyostelium discoideum (Social amoeba).